The sequence spans 398 residues: Phosphoglycerate kinase (398 aa).

Substrate contacts are provided by residues 21–23 (DFN), Arg36, 59–62 (HLGR), Arg119, and Arg157. ATP contacts are provided by residues Lys208, Gly296, Glu327, and 354–357 (GGDS).

It belongs to the phosphoglycerate kinase family. In terms of assembly, monomer.

The protein resides in the cytoplasm. The catalysed reaction is (2R)-3-phosphoglycerate + ATP = (2R)-3-phospho-glyceroyl phosphate + ADP. It participates in carbohydrate degradation; glycolysis; pyruvate from D-glyceraldehyde 3-phosphate: step 2/5. This chain is Phosphoglycerate kinase, found in Streptococcus agalactiae serotype III (strain NEM316).